Here is a 259-residue protein sequence, read N- to C-terminus: Proteasome subunit alpha (259 aa).

It belongs to the peptidase T1A family. In terms of assembly, the 20S proteasome core is composed of 14 alpha and 14 beta subunits that assemble into four stacked heptameric rings, resulting in a barrel-shaped structure. The two inner rings, each composed of seven catalytic beta subunits, are sandwiched by two outer rings, each composed of seven alpha subunits. The catalytic chamber with the active sites is on the inside of the barrel. Has a gated structure, the ends of the cylinder being occluded by the N-termini of the alpha-subunits. Is capped at one or both ends by the proteasome regulatory ATPase, PAN.

The protein resides in the cytoplasm. The formation of the proteasomal ATPase PAN-20S proteasome complex, via the docking of the C-termini of PAN into the intersubunit pockets in the alpha-rings, triggers opening of the gate for substrate entry. Interconversion between the open-gate and close-gate conformations leads to a dynamic regulation of the 20S proteasome proteolysis activity. Its function is as follows. Component of the proteasome core, a large protease complex with broad specificity involved in protein degradation. The sequence is that of Proteasome subunit alpha from Methanococcus maripaludis (strain C7 / ATCC BAA-1331).